We begin with the raw amino-acid sequence, 835 residues long: MGILNKIFGTYSERELRRVNPIVNKIEALDEKMQSLKDEDFKLKTEEFKSRLEKGEKLDDILPEAFALVREAAHRTIGLKHYREQLIGGVVLHQGRIGEMKTGEGKTLVATLPAYVNALTGKGVHIVTVNDYLAKRDRDLMAPVYEFLGLKVGVILHNLNNEERQEAYGSDITYGTNSEFGFDYLRDNMVVYKEERVQRKLNFSIVDEVDSILIDEARTPLIISGQGEKSTEFYKVADYFTKSLIAEKDFTIDEKANSAMLTDEGVNKAENFFKVDNYADAENMEIQHHVVQALKANYVMKKDKDYMIKDGEILIVDEFTGRAMEGRRYSDGLHQAIEAKEGVRVERESKTLATITYQNYFRMYNKLSGMTGTAQTEENEFREIYGLDVIVIPTHEPIARIDNADVVYKSEKGKFKAIVDEIVERYKKGQPMLVGTVSIEKSEMLSSMLKKKGVPHQVLNAKYHEKEAEIISHAGEYGMVTIATNMAGRGTDIKLTKEAEEAGGLMIIGTERHESRRIDNQLRGRSGRQGDPGESRFFVSLEDDLMRIFGSERIQGIVDKLGLAEDEAIESKMVSSAIESAQKKVEGNNFDIRKTLLQYDDVINKQREIIYKQRSEVLEGEDLKDQIRDMIRDVVYTAVNSHISGVEEEFETELQNLVNYLEDICLPKALVKVKDISNLSDEEIKEKLLEAVENIYSRKEKEIGEEQIREIERVILLRVVDTKWMDHIDDMDHLKQGIGLRAYRQQDPVQAYQFEGSEMFEEMIYNIKVDTVRYLFHVEVEKAPEREKVAKETSTNYDEDSVKKQPIKKENRIGRNDMCPCGSGKKYKNCCGRMA.

ATP-binding positions include Q85, 103-107 (GEGKT), and D492. Zn(2+)-binding residues include C819, C821, C830, and C831.

It belongs to the SecA family. Monomer and homodimer. Part of the essential Sec protein translocation apparatus which comprises SecA, SecYEG and auxiliary proteins SecDF. Other proteins may also be involved. Zn(2+) is required as a cofactor.

The protein resides in the cell membrane. The protein localises to the cytoplasm. It catalyses the reaction ATP + H2O + cellular proteinSide 1 = ADP + phosphate + cellular proteinSide 2.. Functionally, part of the Sec protein translocase complex. Interacts with the SecYEG preprotein conducting channel. Has a central role in coupling the hydrolysis of ATP to the transfer of proteins into and across the cell membrane, serving as an ATP-driven molecular motor driving the stepwise translocation of polypeptide chains across the membrane. This is Protein translocase subunit SecA from Clostridium botulinum (strain Kyoto / Type A2).